The sequence spans 297 residues: Universal stress protein MT2698 (297 aa).

ATP is bound by residues Gly-13, Ala-43, 117–123 (GCLGSGR), Arg-127, 131–132 (SV), Gly-165, Asp-198, 262–268 (GSRGRGG), and 276–278 (SVG).

This sequence belongs to the universal stress protein A family. As to quaternary structure, homodimer.

In terms of biological role, may play a role in the establishment of a persistent infection (latency) in the host. This is Universal stress protein MT2698 from Mycobacterium tuberculosis (strain CDC 1551 / Oshkosh).